A 200-amino-acid chain; its full sequence is Integrin beta-1-binding protein 1 (200 aa).

Basic residues predominate over residues 1 to 10 (MFRKGKKRHS). The disordered stretch occupies residues 1 to 56 (MFRKGKKRHSSSSSQSSEISTKSKSVDSSLGGLSRSSTVASLDTDSTKSSGQSNNN). The Nuclear localization signal signature appears at 6–7 (KK). A compositionally biased stretch (low complexity) spans 11-29 (SSSSQSSEISTKSKSVDSS). Positions 34-56 (SRSSTVASLDTDSTKSSGQSNNN) are enriched in polar residues. T38 bears the Phosphothreonine; by CaMK2 mark. A Phosphoserine modification is found at S41. A PID domain is found at 58–200 (DTCAEFRIKY…FDSVLTSEKP (143 aa)). An interaction with KRIT1 region spans residues 136-139 (YLII). Residues 139 to 141 (IRM) form an interaction with ITGB1 region.

Interacts (via N-terminus and PTB domain) with ROCK1. Found in a complex, at least composed of ITGB1BP1, KRIT1 and RAP1A. Interacts (via C-terminal region) with ITGB1 (via C-terminal cytoplasmic tail); the interaction prevents talin TLN1 binding to ITGB1 and KRIT1 and ITGB1 compete for the same binding site. Interacts with KRIT1 (via N-terminal NPXY motif); the interaction induces the opening conformation of KRIT1 and KRIT1 and ITGB1 compete for the same binding site. Isoform 2 does not interact with ITGB1. Interacts with CDC42 (GTP- or GDP-bound form); the interaction is increased with the CDC42-membrane bound forms and prevents both CDC42 activation and cell spreading. Interacts (via C-terminal domain region) with NME2. Interacts with FERMT2 and RAC1. In terms of processing, phosphorylation at Thr-38 seems to enhance integrin alpha5beta1-mediated cell adhesion. The degree of phosphorylation is regulated by integrin-dependent cell-matrix interaction.

The protein localises to the nucleus. The protein resides in the cytoplasm. Its subcellular location is the cytoskeleton. It is found in the cell membrane. It localises to the cell projection. The protein localises to the lamellipodium. The protein resides in the ruffle. Key regulator of the integrin-mediated cell-matrix interaction signaling by binding to the ITGB1 cytoplasmic tail and preventing the activation of integrin alpha-5/beta-1 (heterodimer of ITGA5 and ITGB1) by talin or FERMT1. Plays a role in cell proliferation, differentiation, spreading, adhesion and migration in the context of mineralization and bone development and angiogenesis. Stimulates cellular proliferation in a fibronectin-dependent manner. Involved in the regulation of beta-1 integrin-containing focal adhesion (FA) site dynamics by controlling its assembly rate during cell adhesion; inhibits beta-1 integrin clustering within FA by directly competing with talin TLN1, and hence stimulates osteoblast spreading and migration in a fibronectin- and/or collagen-dependent manner. Acts as a guanine nucleotide dissociation inhibitor (GDI) by regulating Rho family GTPases during integrin-mediated cell matrix adhesion; reduces the level of active GTP-bound form of both CDC42 and RAC1 GTPases upon cell adhesion to fibronectin. Stimulates the release of active CDC42 from the membranes to maintain it in an inactive cytoplasmic pool. Participates in the translocation of the Rho-associated protein kinase ROCK1 to membrane ruffles at cell leading edges of the cell membrane, leading to an increase of myoblast cell migration on laminin. Plays a role in bone mineralization at a late stage of osteoblast differentiation; modulates the dynamic formation of focal adhesions into fibrillar adhesions, which are adhesive structures responsible for fibronectin deposition and fibrillogenesis. Plays a role in blood vessel development; acts as a negative regulator of angiogenesis by attenuating endothelial cell proliferation and migration, lumen formation and sprouting angiogenesis by promoting AKT phosphorylation and inhibiting ERK1/2 phosphorylation through activation of the Notch signaling pathway. Promotes transcriptional activity of the MYC promoter. This chain is Integrin beta-1-binding protein 1 (ITGB1BP1), found in Bos taurus (Bovine).